The chain runs to 518 residues: Chromosomal replication initiator protein DnaA (518 aa).

The domain I, interacts with DnaA modulators stretch occupies residues 1-72; the sequence is MNEFWQHCSA…DLARDFWHSP (72 aa). The tract at residues 72–181 is domain II; the sequence is PVDVQFVLDP…GESDSTYERS (110 aa). Residues 155-178 are disordered; the sequence is AAARRTWRPGAAAQAAGGESDSTY. A domain III, AAA+ region region spans residues 182–398; it reads KLNPVLTFDN…GALRKILAYS (217 aa). The ATP site is built by G226, G228, K229, and T230. Positions 399-518 are domain IV, binds dsDNA; that stretch reads KFHGREITIE…LHVLEQTLKG (120 aa).

This sequence belongs to the DnaA family. In terms of assembly, oligomerizes as a right-handed, spiral filament on DNA at oriC.

The protein localises to the cytoplasm. Its function is as follows. Plays an essential role in the initiation and regulation of chromosomal replication. ATP-DnaA binds to the origin of replication (oriC) to initiate formation of the DNA replication initiation complex once per cell cycle. Binds the DnaA box (a 9 base pair repeat at the origin) and separates the double-stranded (ds)DNA. Forms a right-handed helical filament on oriC DNA; dsDNA binds to the exterior of the filament while single-stranded (ss)DNA is stabiized in the filament's interior. The ATP-DnaA-oriC complex binds and stabilizes one strand of the AT-rich DNA unwinding element (DUE), permitting loading of DNA polymerase. After initiation quickly degrades to an ADP-DnaA complex that is not apt for DNA replication. Binds acidic phospholipids. In Paraburkholderia phymatum (strain DSM 17167 / CIP 108236 / LMG 21445 / STM815) (Burkholderia phymatum), this protein is Chromosomal replication initiator protein DnaA.